The following is a 260-amino-acid chain: Methylesterase 7 (260 aa).

S84 serves as the catalytic Acyl-ester intermediate. Residues D210 and H238 each act as charge relay system in the active site.

This sequence belongs to the AB hydrolase superfamily. Methylesterase family.

It catalyses the reaction methyl (indol-3-yl)acetate + H2O = (indol-3-yl)acetate + methanol + H(+). It carries out the reaction methyl salicylate + H2O = salicylate + methanol + H(+). It functions in the pathway plant hormone biosynthesis. With respect to regulation, esterase activity is down-regulated by salicylic acid (SA). Methylesterase shown to have carboxylesterase activity, methyl indole-3-acetic acid (MeIAA) esterase activity and methyl salicylate (MeSA) esterase activity in vitro. Required to convert methyl salicylate (MeSA) to salicylic acid (SA) as part of the signal transduction pathways that activate systemic acquired resistance in systemic tissue. MeSA is believed to be an inactive form that needs to be demethylated to exert a biological effect. This Arabidopsis thaliana (Mouse-ear cress) protein is Methylesterase 7.